The primary structure comprises 336 residues: Probable tRNA N6-adenosine threonylcarbamoyltransferase (336 aa).

3 residues coordinate a divalent metal cation: histidine 110, histidine 114, and tyrosine 131. Substrate-binding positions include 131 to 135, aspartate 163, glycine 178, glutamate 182, and asparagine 267; that span reads YVSGG. Aspartate 295 is a binding site for a divalent metal cation.

The protein belongs to the KAE1 / TsaD family. Component of the EKC/KEOPS complex; the whole complex dimerizes. Requires a divalent metal cation as cofactor.

It is found in the cytoplasm. The protein resides in the nucleus. The enzyme catalyses L-threonylcarbamoyladenylate + adenosine(37) in tRNA = N(6)-L-threonylcarbamoyladenosine(37) in tRNA + AMP + H(+). Functionally, component of the EKC/KEOPS complex that is required for the formation of a threonylcarbamoyl group on adenosine at position 37 (t(6)A37) in tRNAs that read codons beginning with adenine. The complex is probably involved in the transfer of the threonylcarbamoyl moiety of threonylcarbamoyl-AMP (TC-AMP) to the N6 group of A37. Osgep likely plays a direct catalytic role in this reaction, but requires other protein(s) of the complex to fulfill this activity. The sequence is that of Probable tRNA N6-adenosine threonylcarbamoyltransferase from Dictyostelium discoideum (Social amoeba).